A 264-amino-acid polypeptide reads, in one-letter code: Molybdenum transport system permease protein ModB (264 aa).

6 helical membrane-spanning segments follow: residues 11–31, 57–77, 90–110, 127–147, 176–196, and 234–254; these read VYLP…AIAI, TAAA…LVLA, LILL…LYAF, IAFS…PYLV, WWRV…VLAF, and AAVA…LGVG. The 203-residue stretch at 51 to 253 folds into the ABC transmembrane type-1 domain; that stretch reads LLLSVKTAAA…VVAALVVLGV (203 aa).

It belongs to the binding-protein-dependent transport system permease family. CysTW subfamily.

It is found in the cell membrane. Functionally, part of the binding-protein-dependent transport system ModABCD for molybdenum; probably responsible for the translocation of the substrate across the membrane. The sequence is that of Molybdenum transport system permease protein ModB (modB) from Mycobacterium bovis (strain ATCC BAA-935 / AF2122/97).